The following is a 363-amino-acid chain: NADH-quinone oxidoreductase subunit H (363 aa).

10 consecutive transmembrane segments (helical) span residues 29 to 49, 62 to 82, 96 to 116, 127 to 147, 163 to 183, 202 to 222, 239 to 257, 264 to 286, 299 to 319, and 339 to 359; these read VLKI…YVVW, GPMY…KLLF, FIIA…VVPF, VGLL…ILAG, AAQV…VMIA, FFDW…VSGV, IVAG…LFFL, ILVS…QGWV, TGGW…YIWF, and FIPL…YGVI.

This sequence belongs to the complex I subunit 1 family. NDH-1 is composed of 14 different subunits. Subunits NuoA, H, J, K, L, M, N constitute the membrane sector of the complex.

The protein resides in the cell inner membrane. The catalysed reaction is a quinone + NADH + 5 H(+)(in) = a quinol + NAD(+) + 4 H(+)(out). NDH-1 shuttles electrons from NADH, via FMN and iron-sulfur (Fe-S) centers, to quinones in the respiratory chain. The immediate electron acceptor for the enzyme in this species is believed to be ubiquinone. Couples the redox reaction to proton translocation (for every two electrons transferred, four hydrogen ions are translocated across the cytoplasmic membrane), and thus conserves the redox energy in a proton gradient. This subunit may bind ubiquinone. This chain is NADH-quinone oxidoreductase subunit H, found in Xanthomonas campestris pv. campestris (strain B100).